We begin with the raw amino-acid sequence, 213 residues long: Probable septum site-determining protein MinC (213 aa).

Belongs to the MinC family. Interacts with MinD and FtsZ.

In terms of biological role, cell division inhibitor that blocks the formation of polar Z ring septums. Rapidly oscillates between the poles of the cell to destabilize FtsZ filaments that have formed before they mature into polar Z rings. Prevents FtsZ polymerization. The sequence is that of Probable septum site-determining protein MinC from Pseudothermotoga lettingae (strain ATCC BAA-301 / DSM 14385 / NBRC 107922 / TMO) (Thermotoga lettingae).